The following is a 61-amino-acid chain: Photosystem II assembly protein Psb34 (61 aa).

The chain crosses the membrane as a helical span at residues 36–56 (LIMAAITVVLVAGLIAVAVVA).

The protein belongs to the Psb34 family. As to quaternary structure, part of the photosystem II (PSII) assembly intermediate RC47 complex (with D1, D2, CP47, PsbE, PsbF, PsbH, Psb27 and Psb28); minor amounts are found in other PSII complexes, including mature, dimeric PSII with PsbO and PsbV. No HliA or HliB are detected in any of these complexes. Its interaction with PSII requires both CP47 (psbB) and PsbH. HliA/HliB and Psb34 probably bind to a similar site on CP47; their binding seems to be mutually exclusive.

The protein resides in the cellular thylakoid membrane. In terms of biological role, involved in photosystem II (PSII) assembly and/or repair. Probably involved in conversion of late PSII assembly intermediates into mature dimeric PSII, it may mediate the optimal equlibrium of HliA/HliB among the intermediates containing CP47 (psbB) to facilitate photoprotection during assembly. The polypeptide is Photosystem II assembly protein Psb34 (Synechocystis sp. (strain ATCC 27184 / PCC 6803 / Kazusa)).